The following is a 121-amino-acid chain: Small ribosomal subunit protein uS13 (121 aa).

The disordered stretch occupies residues 91–121 (HRRGLPVRGQNTKNNARTRKGPSKTVAGKKK). Over residues 106 to 121 (ARTRKGPSKTVAGKKK) the composition is skewed to basic residues.

It belongs to the universal ribosomal protein uS13 family. In terms of assembly, part of the 30S ribosomal subunit. Forms a loose heterodimer with protein S19. Forms two bridges to the 50S subunit in the 70S ribosome.

Functionally, located at the top of the head of the 30S subunit, it contacts several helices of the 16S rRNA. In the 70S ribosome it contacts the 23S rRNA (bridge B1a) and protein L5 of the 50S subunit (bridge B1b), connecting the 2 subunits; these bridges are implicated in subunit movement. Contacts the tRNAs in the A and P-sites. The chain is Small ribosomal subunit protein uS13 from Listeria welshimeri serovar 6b (strain ATCC 35897 / DSM 20650 / CCUG 15529 / CIP 8149 / NCTC 11857 / SLCC 5334 / V8).